The sequence spans 267 residues: Phosphatidylserine decarboxylase proenzyme (267 aa).

Catalysis depends on charge relay system; for autoendoproteolytic cleavage activity residues D78, H132, and S236. S236 acts as the Schiff-base intermediate with substrate; via pyruvic acid; for decarboxylase activity in catalysis. S236 carries the post-translational modification Pyruvic acid (Ser); by autocatalysis.

It belongs to the phosphatidylserine decarboxylase family. PSD-B subfamily. Prokaryotic type I sub-subfamily. Heterodimer of a large membrane-associated beta subunit and a small pyruvoyl-containing alpha subunit. Pyruvate is required as a cofactor. In terms of processing, is synthesized initially as an inactive proenzyme. Formation of the active enzyme involves a self-maturation process in which the active site pyruvoyl group is generated from an internal serine residue via an autocatalytic post-translational modification. Two non-identical subunits are generated from the proenzyme in this reaction, and the pyruvate is formed at the N-terminus of the alpha chain, which is derived from the carboxyl end of the proenzyme. The autoendoproteolytic cleavage occurs by a canonical serine protease mechanism, in which the side chain hydroxyl group of the serine supplies its oxygen atom to form the C-terminus of the beta chain, while the remainder of the serine residue undergoes an oxidative deamination to produce ammonia and the pyruvoyl prosthetic group on the alpha chain. During this reaction, the Ser that is part of the protease active site of the proenzyme becomes the pyruvoyl prosthetic group, which constitutes an essential element of the active site of the mature decarboxylase.

The protein localises to the cell membrane. The catalysed reaction is a 1,2-diacyl-sn-glycero-3-phospho-L-serine + H(+) = a 1,2-diacyl-sn-glycero-3-phosphoethanolamine + CO2. The protein operates within phospholipid metabolism; phosphatidylethanolamine biosynthesis; phosphatidylethanolamine from CDP-diacylglycerol: step 2/2. Functionally, catalyzes the formation of phosphatidylethanolamine (PtdEtn) from phosphatidylserine (PtdSer). The protein is Phosphatidylserine decarboxylase proenzyme of Helicobacter pylori (strain ATCC 700392 / 26695) (Campylobacter pylori).